Consider the following 123-residue polypeptide: Photosystem II extrinsic protein U (123 aa).

The N-terminal stretch at M1–A28 is a signal peptide.

It belongs to the PsbU family. As to quaternary structure, PSII is composed of 1 copy each of membrane proteins PsbA, PsbB, PsbC, PsbD, PsbE, PsbF, PsbH, PsbI, PsbJ, PsbK, PsbL, PsbM, PsbT, PsbX, PsbY, PsbZ, Psb30/Ycf12, peripheral proteins PsbO, CyanoQ (PsbQ), PsbU, PsbV and a large number of cofactors. It forms dimeric complexes.

It localises to the cellular thylakoid membrane. Its function is as follows. One of the extrinsic, lumenal subunits of photosystem II (PSII). PSII is a light-driven water plastoquinone oxidoreductase, using light energy to abstract electrons from H(2)O, generating a proton gradient subsequently used for ATP formation. The extrinsic proteins stabilize the structure of photosystem II oxygen-evolving complex (OEC), the ion environment of oxygen evolution and protect the OEC against heat-induced inactivation. The sequence is that of Photosystem II extrinsic protein U from Gloeothece citriformis (strain PCC 7424) (Cyanothece sp. (strain PCC 7424)).